The chain runs to 339 residues: N-acetyl-gamma-glutamyl-phosphate reductase (339 aa).

Cys144 is an active-site residue.

The protein belongs to the NAGSA dehydrogenase family. Type 1 subfamily.

The protein resides in the cytoplasm. It carries out the reaction N-acetyl-L-glutamate 5-semialdehyde + phosphate + NADP(+) = N-acetyl-L-glutamyl 5-phosphate + NADPH + H(+). It functions in the pathway amino-acid biosynthesis; L-arginine biosynthesis; N(2)-acetyl-L-ornithine from L-glutamate: step 3/4. In terms of biological role, catalyzes the NADPH-dependent reduction of N-acetyl-5-glutamyl phosphate to yield N-acetyl-L-glutamate 5-semialdehyde. The polypeptide is N-acetyl-gamma-glutamyl-phosphate reductase (Methanobrevibacter smithii (strain ATCC 35061 / DSM 861 / OCM 144 / PS)).